The primary structure comprises 549 residues: Speedy protein E3 (549 aa).

Positions 1 to 15 (MTSHQPQPQEEQSPQ) are enriched in low complexity. 5 disordered regions span residues 1–74 (MTSH…EPEE), 126–145 (KREC…APEP), 188–218 (SPPR…APEP), 261–291 (SPPR…APEP), and 334–364 (SPPR…APEP). Composition is skewed to acidic residues over residues 58 to 74 (DESD…EPEE), 131 to 145 (DESD…APEP), 204 to 218 (DESD…APEP), 277 to 291 (DESD…APEP), and 350 to 364 (DESD…APEP).

The protein belongs to the Speedy/Ringo family. As to expression, predominantly expressed in testis and spleen.

The protein is Speedy protein E3 of Homo sapiens (Human).